The sequence spans 455 residues: Post-transcriptional regulator MTA (455 aa).

Positions 17–163 are disordered; that stretch reads DSVSSSEFDE…QVNCQRQDDD (147 aa). Residues 23–42 are compositionally biased toward acidic residues; that stretch reads EFDESRDDETDAPTLEDEQL. Over residues 88–98 the composition is skewed to low complexity; that stretch reads SPLSRPRSPSP. Short sequence motifs (nuclear localization signal) lie at residues 101–107, 121–130, and 143–152; these read RYGKKIK, KRPRRRPRDR, and RAAPKRATRR. Positions 333, 423, 427, and 432 each coordinate Zn(2+). Residues 333-432 form a CHC2-type zinc finger; sequence CVFDKQSELA…HHSLCRNSEC (100 aa).

It belongs to the HHV-1 ICP27 protein family. As to quaternary structure, homodimer. Homodimerization is required for transactivation. Interacts with host ALYREF. Associates in a complex with RNA, and host export factors NXF1/TAP and ALYREF; these interactions allow nuclear export of viral transcripts. Interacts with protein K-bZIP/K8; this interaction promotes viral gene expression during lytic infection. Interacts with host PABPC1. Interacts with host AGO2 and TNRC6A; these interactions inhibit host P-body formation. Interacts with PRKRA and EIF2AK2/PKR; these interactions inhibit host stress granule formation. In terms of processing, proteolytically cleaved by host caspase-7 (CASP7), leading to its inactivation, thereby preventing expression of viral lytic genes.

Its subcellular location is the host cytoplasm. The protein resides in the host nucleus. Post-transcriptional regulator that plays an essential role in the expression of viral lytic genes and productive viral replication. Possesses numerous activities that promote the expression of viral genes including enhancement of RNA stability, promotion of RNA splicing and stimulation of protein translation often via its ability to interact with different cellular cofactors. Stabilizes polyadenylated nuclear (PAN) RNA by cooperative binding to a 9-nt core of the MRE (MTA responsive element) together with host PABPC1. Functions as a viral splicing factor and promotes expression of intron-containing viral lytic genes. Protects viral transcripts from specific nuclear RNA decay pathways by preventing host MTREX recruitment that promotes unwinding and degradation of structured RNA substrates. Plays a role in the inhibition of host P-body formation by altering the scaffolding activity of TNRC6A at the initial stage thereby enhancing virus production. Also inhibits host stress granule formation by blocking autophosphorylation of EIF2AK2/PKR and its subsequent binding to dsRNA. The polypeptide is Post-transcriptional regulator MTA (Human herpesvirus 8 type P (isolate GK18) (HHV-8)).